The chain runs to 212 residues: Large ribosomal subunit protein uL3 (212 aa).

Positions 119–146 (YQGNIKRWGQSRGPETHGSRYHRIPGSM) are disordered.

The protein belongs to the universal ribosomal protein uL3 family. In terms of assembly, part of the 50S ribosomal subunit. Forms a cluster with proteins L14 and L19.

Functionally, one of the primary rRNA binding proteins, it binds directly near the 3'-end of the 23S rRNA, where it nucleates assembly of the 50S subunit. This chain is Large ribosomal subunit protein uL3, found in Lactobacillus helveticus (strain DPC 4571).